Here is a 309-residue protein sequence, read N- to C-terminus: Homoserine kinase (309 aa).

91 to 101 (PLARGLGSSAA) lines the ATP pocket.

Belongs to the GHMP kinase family. Homoserine kinase subfamily.

It is found in the cytoplasm. The catalysed reaction is L-homoserine + ATP = O-phospho-L-homoserine + ADP + H(+). It functions in the pathway amino-acid biosynthesis; L-threonine biosynthesis; L-threonine from L-aspartate: step 4/5. Catalyzes the ATP-dependent phosphorylation of L-homoserine to L-homoserine phosphate. The chain is Homoserine kinase from Bacillus velezensis (strain DSM 23117 / BGSC 10A6 / LMG 26770 / FZB42) (Bacillus amyloliquefaciens subsp. plantarum).